The following is a 626-amino-acid chain: MHYPKVYDVIVIGGGHAGTEAALAAARMGRQTLLLTHNIETLGQMSCNPAIGGIGKSHLVREIDALGGAMALAADKGGIQFRILNSRKGAAVRATRAQADRVRYKAAIRETLENQANLDIFQQAADDLIVEGDTVKGVVTQMGIRFDAKTVVLTTGTFLGGVIHVGLEKSSGGRAGDPPSIALAQRLRELKLPVGRLKTGTPPRIDARSVDFSVMTPQPGDFPSPVMSFMGDVSMHPEQVNCYITHTNEKTHDIIRGGLDRSPMYTGVIEGVGPRYCPSIEDKIHRFSDKDSHQVFLEPEGLDTHELYPNGISTSLPFDVQFELVRSIRGMENAHILRPGYAIEYDYFNPQALKFTLETKAINGLYFAGQINGTTGYEEAGAQGLLAGLNAARRAWEQEEWTPKRDQAYMGVLVDDLITLGTKEPYRMFTSRAEYRLMLREDNADQRLTTIGRELGLVDDVRWAAYCEKMEAVERETSRLQHLWAAPNNPMGKKFVEMTGADLSKECSAIDLLKRPNINFGQIAELTGSEVSQQVGEQIEIAVKYEGYINRQHEDVAQLKRLEETKIPADFDYDVVSGLSREITQKLKTVRPETLAQASRIPGVTPAAVQLVMITIRKNNMTKKTA.

13 to 18 (GGGHAG) provides a ligand contact to FAD. 273–287 (GPRYCPSIEDKIHRF) lines the NAD(+) pocket.

Belongs to the MnmG family. Homodimer. Heterotetramer of two MnmE and two MnmG subunits. The cofactor is FAD.

The protein localises to the cytoplasm. In terms of biological role, NAD-binding protein involved in the addition of a carboxymethylaminomethyl (cmnm) group at the wobble position (U34) of certain tRNAs, forming tRNA-cmnm(5)s(2)U34. The polypeptide is tRNA uridine 5-carboxymethylaminomethyl modification enzyme MnmG (Acinetobacter baumannii (strain ACICU)).